Here is a 60-residue protein sequence, read N- to C-terminus: Cytotoxin 5 (60 aa).

Disulfide bonds link C3/C21, C14/C38, C42/C53, and C54/C59.

The protein belongs to the three-finger toxin family. Short-chain subfamily. Type IA cytotoxin sub-subfamily. In terms of assembly, monomer in solution; Homodimer and oligomer in the presence of negatively charged lipids forming a pore with a size ranging between 20 and 30 Angstroms. Expressed by the venom gland.

The protein localises to the secreted. It localises to the target cell membrane. Functionally, shows cytolytic activity on many different cells by forming pore in lipid membranes. In vivo, increases heart rate or kills the animal by cardiac arrest. In addition, it binds to heparin with high affinity, interacts with Kv channel-interacting protein 1 (KCNIP1) in a calcium-independent manner, and binds to integrin alpha-V/beta-3 (ITGAV/ITGB3) with moderate affinity. This is Cytotoxin 5 from Naja annulifera (Banded Egyptian cobra).